The chain runs to 416 residues: UDP-N-acetylglucosamine 1-carboxyvinyltransferase (416 aa).

22–23 contributes to the phosphoenolpyruvate binding site; the sequence is KN. Residue R92 coordinates UDP-N-acetyl-alpha-D-glucosamine. Residue C116 is the Proton donor of the active site. Position 116 is a 2-(S-cysteinyl)pyruvic acid O-phosphothioketal (C116). UDP-N-acetyl-alpha-D-glucosamine-binding positions include 121–125, D304, and I326; that span reads RPVDQ.

Belongs to the EPSP synthase family. MurA subfamily.

It is found in the cytoplasm. The enzyme catalyses phosphoenolpyruvate + UDP-N-acetyl-alpha-D-glucosamine = UDP-N-acetyl-3-O-(1-carboxyvinyl)-alpha-D-glucosamine + phosphate. Its pathway is cell wall biogenesis; peptidoglycan biosynthesis. Its function is as follows. Cell wall formation. Adds enolpyruvyl to UDP-N-acetylglucosamine. The chain is UDP-N-acetylglucosamine 1-carboxyvinyltransferase from Cupriavidus metallidurans (strain ATCC 43123 / DSM 2839 / NBRC 102507 / CH34) (Ralstonia metallidurans).